The primary structure comprises 125 residues: Small ribosomal subunit protein bS6 (125 aa).

The segment at 97–125 (TEASPMKAAKEERKPLAEVENNDFEDAEE) is disordered. Residues 104-113 (AAKEERKPLA) are compositionally biased toward basic and acidic residues. Residues 116 to 125 (ENNDFEDAEE) are compositionally biased toward acidic residues.

It belongs to the bacterial ribosomal protein bS6 family.

Binds together with bS18 to 16S ribosomal RNA. This is Small ribosomal subunit protein bS6 from Haemophilus influenzae (strain PittEE).